Here is a 1001-residue protein sequence, read N- to C-terminus: Receptor-type tyrosine-protein phosphatase N2 (1001 aa).

Positions 1–27 (MGPPLPLLLLLLLPPPLPRALPAPASA) are cleaved as a signal peptide. The segment at 1 to 407 (MGPPLPLLLL…PEGPLLEKSS (407 aa)) is involved in localization to secretory granules; interaction with CPE. Over 28-600 (RGRQLPGRLG…HQEEQEDSTK (573 aa)) the chain is Extracellular. Residue arginine 259 is modified to Omega-N-methylarginine. Disordered regions lie at residues 271-296 (PFSA…SMDD), 308-359 (QQNS…DAPE), and 394-459 (SPLL…LEDQ). Residues 312-325 (EVDRLGPLKEEKAD) are compositionally biased toward basic and acidic residues. The residue at position 339 (serine 339) is a Phosphoserine. A compositionally biased stretch (basic and acidic residues) spans 340 to 355 (QESHGRGAEGQPREQT). The span at 394–404 (SPLLPEGPLLE) shows a compositional bias: low complexity. Positions 405–416 (KSSREEIKKSEQ) are enriched in basic and acidic residues. The span at 417 to 428 (PEEVLSSEEETA) shows a compositional bias: acidic residues. 2 positions are modified to phosphoserine: serine 422 and serine 423. Basic and acidic residues predominate over residues 429 to 459 (GVEHVRSRTYSKDLFERKPNSEPQPRRLEDQ). Asparagine 550 is a glycosylation site (N-linked (GlcNAc...) asparagine). Residues 601–621 (FILLTFLSIACILGVLLASSL) form a helical membrane-spanning segment. Residues 622-1001 (AYCLRHNSHY…VNAILKALPQ (380 aa)) are Cytoplasmic-facing. A Tyrosine-based internalization motif motif is present at residues 652 to 661 (YQELCRQRMA). Residues 663–705 (RPQDRSEGPHTSRINSVSSQFSDGPMPSPSARSSTSSWSEEPV) are disordered. Polar residues predominate over residues 674 to 684 (SRINSVSSQFS). 2 positions are modified to phosphoserine: serine 678 and serine 684. Low complexity predominate over residues 691 to 705 (PSARSSTSSWSEEPV). Threonine 697 carries the post-translational modification Phosphothreonine. The Tyrosine-protein phosphatase domain maps to 731–991 (LEKEWEALCA…EFALTAVAEE (261 aa)). Substrate contacts are provided by residues aspartate 899 and 931–937 (CSDGAGR). Residue cysteine 931 is the Phosphocysteine intermediate of the active site. Lysine 956 carries the N6-acetyllysine modification. Glutamine 976 contacts substrate. The Leucine-based sorting signal motif lies at 990–996 (EEVNAIL).

Belongs to the protein-tyrosine phosphatase family. In terms of assembly, self-associates. Interacts (via cytoplasmic domain) with PTPRN (via cytoplasmic domain). Interacts (precursor form) with CPE. Interacts with HAP1 isoform A. Interacts with AP2A1 or AP2A2 and AP1G1; indicative for an association with adaptor protein complex 2 (AP-2) and adaptor protein complex 1 (AP-1). Interacts with AP2M1; indicative for an association with adaptor protein complex 2 (AP-2). Interacts with MYO5A. In terms of processing, subject to proteolytic cleavage at multiple sites during maturation of secretory granules. In the brain at least IA-2beta71, IA-2beta64 and IA-2beta60 have been detected, in the pancreas and a pancreatic beta cell line only IA-2beta60 has been detected. As to expression, detected in brain. Detected in pancreas islets (at protein level). Detected in pancreas and brain.

It is found in the cytoplasmic vesicle. The protein localises to the secretory vesicle membrane. The protein resides in the secretory vesicle. It localises to the synaptic vesicle membrane. It catalyses the reaction O-phospho-L-tyrosyl-[protein] + H2O = L-tyrosyl-[protein] + phosphate. Functionally, plays a role in vesicle-mediated secretory processes. Required for normal accumulation of secretory vesicles in hippocampus, pituitary and pancreatic islets. Required for the accumulation of normal levels of insulin-containing vesicles and preventing their degradation. Plays a role in insulin secretion in response to glucose stimuli. Required for normal accumulation of the neurotransmitters norepinephrine, dopamine and serotonin in the brain. In females, but not in males, required for normal accumulation and secretion of pituitary hormones, such as luteinizing hormone (LH) and follicle-stimulating hormone (FSH). Required to maintain normal levels of renin expression and renin release. May regulate catalytic active protein-tyrosine phosphatases such as PTPRA through dimerization. Has phosphatidylinositol phosphatase activity; the PIPase activity is involved in its ability to regulate insulin secretion. Can dephosphorylate phosphatidylinositol 4,5-biphosphate (PI(4,5)P2), phosphatidylinositol 5-phosphate and phosphatidylinositol 3-phosphate. Regulates PI(4,5)P2 level in the plasma membrane and localization of cofilin at the plasma membrane and thus is indirectly involved in regulation of actin dynamics related to cell migration and metastasis; upon hydrolysis of PI(4,5)P2 cofilin is released from the plasma membrane and acts in the cytoplasm in severing F-actin filaments. The chain is Receptor-type tyrosine-protein phosphatase N2 (Ptprn2) from Mus musculus (Mouse).